Reading from the N-terminus, the 154-residue chain is UPF0756 membrane protein BPUM_2558 (154 aa).

4 helical membrane-spanning segments follow: residues 8-28 (FLVL…ILAV), 54-74 (WGVT…DIGF), 87-107 (WIAL…IVLL), and 117-137 (LVFG…GPLI).

This sequence belongs to the UPF0756 family.

The protein resides in the cell membrane. The polypeptide is UPF0756 membrane protein BPUM_2558 (Bacillus pumilus (strain SAFR-032)).